A 441-amino-acid polypeptide reads, in one-letter code: Tol-Pal system protein TolB (441 aa).

An N-terminal signal peptide occupies residues 1–25; it reads MRIFFFAYVLPTVISLLLGCQGAIA.

It belongs to the TolB family. The Tol-Pal system is composed of five core proteins: the inner membrane proteins TolA, TolQ and TolR, the periplasmic protein TolB and the outer membrane protein Pal. They form a network linking the inner and outer membranes and the peptidoglycan layer.

It localises to the periplasm. Part of the Tol-Pal system, which plays a role in outer membrane invagination during cell division and is important for maintaining outer membrane integrity. This is Tol-Pal system protein TolB from Anaplasma marginale (strain St. Maries).